The sequence spans 130 residues: Protein ApaG (130 aa).

Residues 3–127 (RALTKDIEVV…FSLDSPGLLR (125 aa)) form the ApaG domain.

The protein is Protein ApaG of Rhizobium leguminosarum bv. trifolii (strain WSM2304).